The chain runs to 127 residues: Small ribosomal subunit protein uS12 (127 aa).

D89 carries the post-translational modification 3-methylthioaspartic acid.

Belongs to the universal ribosomal protein uS12 family. Part of the 30S ribosomal subunit. Contacts proteins S8 and S17. May interact with IF1 in the 30S initiation complex.

Functionally, with S4 and S5 plays an important role in translational accuracy. Interacts with and stabilizes bases of the 16S rRNA that are involved in tRNA selection in the A site and with the mRNA backbone. Located at the interface of the 30S and 50S subunits, it traverses the body of the 30S subunit contacting proteins on the other side and probably holding the rRNA structure together. The combined cluster of proteins S8, S12 and S17 appears to hold together the shoulder and platform of the 30S subunit. The sequence is that of Small ribosomal subunit protein uS12 from Campylobacter fetus subsp. fetus (strain 82-40).